The following is a 131-amino-acid chain: Profilin-8 (131 aa).

Residues cysteine 13 and cysteine 115 are joined by a disulfide bond. The Involved in PIP2 interaction motif lies at 81-97 (AVIRGKKGAGGITIKKT). Threonine 111 bears the Phosphothreonine mark.

The protein belongs to the profilin family. In terms of assembly, occurs in many kinds of cells as a complex with monomeric actin in a 1:1 ratio. In terms of processing, phosphorylated by MAP kinases.

It is found in the cytoplasm. Its subcellular location is the cytoskeleton. In terms of biological role, binds to actin and affects the structure of the cytoskeleton. At high concentrations, profilin prevents the polymerization of actin, whereas it enhances it at low concentrations. This Phleum pratense (Common timothy) protein is Profilin-8.